We begin with the raw amino-acid sequence, 280 residues long: Phosphonoacetaldehyde hydrolase (280 aa).

Residue Asp-23 is the Nucleophile of the active site. Mg(2+) is bound by residues Asp-23 and Ala-25. The Schiff-base intermediate with substrate role is filled by Lys-64. Asp-197 provides a ligand contact to Mg(2+).

The protein belongs to the HAD-like hydrolase superfamily. PhnX family. In terms of assembly, homodimer. Mg(2+) is required as a cofactor.

The catalysed reaction is phosphonoacetaldehyde + H2O = acetaldehyde + phosphate + H(+). In terms of biological role, involved in phosphonate degradation. In Bordetella avium (strain 197N), this protein is Phosphonoacetaldehyde hydrolase.